A 459-amino-acid chain; its full sequence is UDP-N-acetylmuramoyl-tripeptide--D-alanyl-D-alanine ligase (459 aa).

Residue 121–127 (GSSGKTT) coordinates ATP.

The protein belongs to the MurCDEF family. MurF subfamily.

Its subcellular location is the cytoplasm. It catalyses the reaction D-alanyl-D-alanine + UDP-N-acetyl-alpha-D-muramoyl-L-alanyl-gamma-D-glutamyl-meso-2,6-diaminopimelate + ATP = UDP-N-acetyl-alpha-D-muramoyl-L-alanyl-gamma-D-glutamyl-meso-2,6-diaminopimeloyl-D-alanyl-D-alanine + ADP + phosphate + H(+). The protein operates within cell wall biogenesis; peptidoglycan biosynthesis. Its function is as follows. Involved in cell wall formation. Catalyzes the final step in the synthesis of UDP-N-acetylmuramoyl-pentapeptide, the precursor of murein. This chain is UDP-N-acetylmuramoyl-tripeptide--D-alanyl-D-alanine ligase, found in Treponema pallidum (strain Nichols).